The sequence spans 121 residues: Small ribosomal subunit protein uS13 (121 aa).

Positions 93–121 (KGLPLRGQKTKTNARTRKGPKKTIANKKK) are disordered.

This sequence belongs to the universal ribosomal protein uS13 family. In terms of assembly, part of the 30S ribosomal subunit. Forms a loose heterodimer with protein S19. Forms two bridges to the 50S subunit in the 70S ribosome.

Functionally, located at the top of the head of the 30S subunit, it contacts several helices of the 16S rRNA. In the 70S ribosome it contacts the 23S rRNA (bridge B1a) and protein L5 of the 50S subunit (bridge B1b), connecting the 2 subunits; these bridges are implicated in subunit movement. Contacts the tRNAs in the A and P-sites. The chain is Small ribosomal subunit protein uS13 from Clostridium perfringens (strain ATCC 13124 / DSM 756 / JCM 1290 / NCIMB 6125 / NCTC 8237 / Type A).